The sequence spans 247 residues: 23S rRNA (guanosine-2'-O-)-methyltransferase RlmB (247 aa).

Positions 197, 217, and 226 each coordinate S-adenosyl-L-methionine.

It belongs to the class IV-like SAM-binding methyltransferase superfamily. RNA methyltransferase TrmH family. RlmB subfamily.

It is found in the cytoplasm. The enzyme catalyses guanosine(2251) in 23S rRNA + S-adenosyl-L-methionine = 2'-O-methylguanosine(2251) in 23S rRNA + S-adenosyl-L-homocysteine + H(+). Functionally, specifically methylates the ribose of guanosine 2251 in 23S rRNA. This Vibrio vulnificus (strain CMCP6) protein is 23S rRNA (guanosine-2'-O-)-methyltransferase RlmB.